The primary structure comprises 423 residues: Adenylosuccinate synthetase (423 aa).

Residues 13-19 and 41-43 contribute to the GTP site; these read GDEGKGK and GHT. Residue D14 is the Proton acceptor of the active site. Mg(2+) contacts are provided by D14 and G41. Residues 14–17, 39–42, T130, R144, Q223, T238, and R302 contribute to the IMP site; these read DEGK and NAGH. H42 functions as the Proton donor in the catalytic mechanism. 298-304 is a substrate binding site; sequence SVTGRKR. GTP contacts are provided by residues R304 and 410–412; that span reads SVG.

This sequence belongs to the adenylosuccinate synthetase family. As to quaternary structure, homodimer. The cofactor is Mg(2+).

The protein resides in the cytoplasm. The enzyme catalyses IMP + L-aspartate + GTP = N(6)-(1,2-dicarboxyethyl)-AMP + GDP + phosphate + 2 H(+). It functions in the pathway purine metabolism; AMP biosynthesis via de novo pathway; AMP from IMP: step 1/2. Functionally, plays an important role in the de novo pathway of purine nucleotide biosynthesis. Catalyzes the first committed step in the biosynthesis of AMP from IMP. This Porphyromonas gingivalis (strain ATCC BAA-308 / W83) protein is Adenylosuccinate synthetase.